Reading from the N-terminus, the 78-residue chain is MVKLRLKRCGRKQRAVYRIVAIDVRSRREGRDLRNVGFYDPIKNQSYLNVPAILYFLEKGAQPTGTVRDLLKKAEVFK.

This sequence belongs to the bacterial ribosomal protein bS16 family.

The protein resides in the plastid. It localises to the chloroplast. This Daucus carota (Wild carrot) protein is Small ribosomal subunit protein bS16c.